The following is a 505-amino-acid chain: Protein disulfide-isomerase A3 (505 aa).

The signal sequence occupies residues Met-1–Ala-24. Thioredoxin domains follow at residues Ser-25 to Gly-131 and Ser-341 to Thr-483. Active-site nucleophile residues include Cys-55 and Cys-58. Intrachain disulfides connect Cys-55–Cys-58, Cys-83–Cys-90, and Cys-404–Cys-407. Catalysis depends on nucleophile residues Cys-404 and Cys-407. Residues Pro-486–Leu-505 form a disordered region. The span at Lys-495–Leu-505 shows a compositional bias: basic residues. A Prevents secretion from ER motif is present at residues Lys-502–Leu-505.

It belongs to the protein disulfide isomerase family.

The protein resides in the endoplasmic reticulum. The protein localises to the endoplasmic reticulum lumen. It is found in the melanosome. The enzyme catalyses Catalyzes the rearrangement of -S-S- bonds in proteins.. Protein disulfide isomerase that catalyzes the formation, isomerization, and reduction or oxidation of disulfide bonds in client proteins and functions as a protein folding chaperone. The protein is Protein disulfide-isomerase A3 (PDIA3) of Gallus gallus (Chicken).